A 115-amino-acid polypeptide reads, in one-letter code: Large ribosomal subunit protein bL19 (115 aa).

The protein belongs to the bacterial ribosomal protein bL19 family.

In terms of biological role, this protein is located at the 30S-50S ribosomal subunit interface and may play a role in the structure and function of the aminoacyl-tRNA binding site. The polypeptide is Large ribosomal subunit protein bL19 (Streptococcus gordonii (strain Challis / ATCC 35105 / BCRC 15272 / CH1 / DL1 / V288)).